A 92-amino-acid chain; its full sequence is Putative pterin-4-alpha-carbinolamine dehydratase (92 aa).

Belongs to the pterin-4-alpha-carbinolamine dehydratase family.

The enzyme catalyses (4aS,6R)-4a-hydroxy-L-erythro-5,6,7,8-tetrahydrobiopterin = (6R)-L-erythro-6,7-dihydrobiopterin + H2O. The sequence is that of Putative pterin-4-alpha-carbinolamine dehydratase from Acidobacterium capsulatum (strain ATCC 51196 / DSM 11244 / BCRC 80197 / JCM 7670 / NBRC 15755 / NCIMB 13165 / 161).